Consider the following 746-residue polypeptide: Double-stranded RNA-specific editase B2 (746 aa).

Disordered regions lie at residues 1 to 36 (MASVLGSGRGSGGLSSQLKCKSKRRRRRRSKRKDKV) and 50 to 105 (SPGT…PLEE). Positions 20 to 34 (CKSKRRRRRRSKRKD) are enriched in basic residues. The interval 23–35 (KRRRRRRSKRKDK) is R-domain (ssRNA-binding). DRBM domains lie at 126 to 192 (TPKN…SFVQ) and 284 to 348 (NPVV…ALFD). The A to I editase domain maps to 415–742 (VLSSGTKCIS…VRKPPEQDQF (328 aa)). Zn(2+) is bound at residue H439. The Proton donor role is filled by E441. Residues C497 and C562 each coordinate Zn(2+).

Brain specific.

The protein localises to the nucleus. In terms of biological role, lacks editing activity. It prevents the binding of other ADAR enzymes to targets in vitro, and decreases the efficiency of these enzymes. Capable of binding to dsRNA but also to ssRNA. The sequence is that of Double-stranded RNA-specific editase B2 (Adarb2) from Rattus norvegicus (Rat).